The following is a 63-amino-acid chain: Large ribosomal subunit protein uL29 (63 aa).

Belongs to the universal ribosomal protein uL29 family.

The sequence is that of Large ribosomal subunit protein uL29 from Christiangramia forsetii (strain DSM 17595 / CGMCC 1.15422 / KT0803) (Gramella forsetii).